We begin with the raw amino-acid sequence, 225 residues long: Doublesex- and mab-3-related transcription factor C1 (225 aa).

Over residues 1-12 the composition is skewed to basic and acidic residues; the sequence is MQRPSGSREVRK. Disordered stretches follow at residues 1–49 and 179–216; these read MQRP…SHVH and QTRHQPCGMPGTAGERGLQLPNPSMPPRPASSGSLPSG. A compositionally biased stretch (basic residues) spans 27-37; it reads RVKKHVVRRQK.

The protein belongs to the DMRT family.

This Rattus norvegicus (Rat) protein is Doublesex- and mab-3-related transcription factor C1 (Dmrtc1).